A 336-amino-acid polypeptide reads, in one-letter code: Biotin synthase (336 aa).

Positions 57 to 286 constitute a Radical SAM core domain; the sequence is HHGKSIDLCS…RAIVRTAGGR (230 aa). Cys-75, Cys-79, and Cys-82 together coordinate [4Fe-4S] cluster. Ser-119, Cys-151, Cys-211, and Arg-281 together coordinate [2Fe-2S] cluster.

The protein belongs to the radical SAM superfamily. Biotin synthase family. As to quaternary structure, homodimer. [4Fe-4S] cluster serves as cofactor. It depends on [2Fe-2S] cluster as a cofactor.

The catalysed reaction is (4R,5S)-dethiobiotin + (sulfur carrier)-SH + 2 reduced [2Fe-2S]-[ferredoxin] + 2 S-adenosyl-L-methionine = (sulfur carrier)-H + biotin + 2 5'-deoxyadenosine + 2 L-methionine + 2 oxidized [2Fe-2S]-[ferredoxin]. The protein operates within cofactor biosynthesis; biotin biosynthesis; biotin from 7,8-diaminononanoate: step 2/2. Functionally, catalyzes the conversion of dethiobiotin (DTB) to biotin by the insertion of a sulfur atom into dethiobiotin via a radical-based mechanism. The polypeptide is Biotin synthase (Desulfotalea psychrophila (strain LSv54 / DSM 12343)).